The chain runs to 219 residues: 2-C-methyl-D-erythritol 4-phosphate cytidylyltransferase (219 aa).

The protein belongs to the IspD/TarI cytidylyltransferase family. IspD subfamily.

It carries out the reaction 2-C-methyl-D-erythritol 4-phosphate + CTP + H(+) = 4-CDP-2-C-methyl-D-erythritol + diphosphate. The protein operates within isoprenoid biosynthesis; isopentenyl diphosphate biosynthesis via DXP pathway; isopentenyl diphosphate from 1-deoxy-D-xylulose 5-phosphate: step 2/6. Catalyzes the formation of 4-diphosphocytidyl-2-C-methyl-D-erythritol from CTP and 2-C-methyl-D-erythritol 4-phosphate (MEP). This is 2-C-methyl-D-erythritol 4-phosphate cytidylyltransferase from Endomicrobium trichonymphae.